A 623-amino-acid polypeptide reads, in one-letter code: Sphingomyelinase C 2 (623 aa).

Positions 1–25 (MINKITKPKLLIGYYLLLFSLIRCL) are cleaved as a signal peptide. 2 stretches are compositionally biased toward low complexity: residues 51–61 (VNSVSINNDPA) and 67–80 (NPAS…NAVP). The tract at residues 51 to 121 (VNSVSINNDP…DPNPANLASA (71 aa)) is disordered. Polar residues predominate over residues 89 to 102 (NPVNPASANSNQVN). The span at 110-121 (PADPNPANLASA) shows a compositional bias: low complexity.

The protein localises to the secreted. The enzyme catalyses a sphingomyelin + H2O = phosphocholine + an N-acylsphing-4-enine + H(+). The chain is Sphingomyelinase C 2 (sph2) from Leptospira interrogans serogroup Icterohaemorrhagiae serovar Lai (strain 56601).